A 270-amino-acid polypeptide reads, in one-letter code: Putative phosphoenolpyruvate synthase regulatory protein (270 aa).

ADP is bound at residue 150-157 (GVSRCGKT).

This sequence belongs to the pyruvate, phosphate/water dikinase regulatory protein family. PSRP subfamily.

It catalyses the reaction [pyruvate, water dikinase] + ADP = [pyruvate, water dikinase]-phosphate + AMP + H(+). The catalysed reaction is [pyruvate, water dikinase]-phosphate + phosphate + H(+) = [pyruvate, water dikinase] + diphosphate. Functionally, bifunctional serine/threonine kinase and phosphorylase involved in the regulation of the phosphoenolpyruvate synthase (PEPS) by catalyzing its phosphorylation/dephosphorylation. This is Putative phosphoenolpyruvate synthase regulatory protein from Shewanella woodyi (strain ATCC 51908 / MS32).